The sequence spans 101 residues: Urease subunit beta (101 aa).

The protein belongs to the urease beta subunit family. Heterotrimer of UreA (gamma), UreB (beta) and UreC (alpha) subunits. Three heterotrimers associate to form the active enzyme.

The protein localises to the cytoplasm. The catalysed reaction is urea + 2 H2O + H(+) = hydrogencarbonate + 2 NH4(+). It functions in the pathway nitrogen metabolism; urea degradation; CO(2) and NH(3) from urea (urease route): step 1/1. The chain is Urease subunit beta from Bradyrhizobium diazoefficiens (strain JCM 10833 / BCRC 13528 / IAM 13628 / NBRC 14792 / USDA 110).